The following is a 944-amino-acid chain: Putative alpha,alpha-trehalose-phosphate synthase [UDP-forming] 106 kDa subunit (944 aa).

The span at 73 to 84 shows a compositional bias: polar residues; sequence TNAQSNIATPSP. Disordered stretches follow at residues 73-113 and 129-166; these read TNAQ…NSLS and SKND…SELE. A compositionally biased stretch (low complexity) spans 101-113; that stretch reads PSSDSPSLENSLS. 6 positions are modified to phosphoserine: Ser-141, Ser-145, Ser-149, Ser-150, Ser-163, and Ser-177. The segment at 173–652 is glycosyltransferase; the sequence is SRSLSFSMNG…AVTFQSLIKE (480 aa). Position 189 is a phosphothreonine (Thr-189).

This sequence in the N-terminal section; belongs to the glycosyltransferase 20 family.

It catalyses the reaction D-glucose 6-phosphate + UDP-alpha-D-glucose = alpha,alpha-trehalose 6-phosphate + UDP + H(+). This is Putative alpha,alpha-trehalose-phosphate synthase [UDP-forming] 106 kDa subunit from Schizosaccharomyces pombe (strain 972 / ATCC 24843) (Fission yeast).